We begin with the raw amino-acid sequence, 205 residues long: Ras-related protein RABC2b (205 aa).

20–27 (GDSGVGKS) lines the GTP pocket. The Effector region motif lies at 41-49 (LAPTIGVDF). Residues 67–71 (DTAGQ), 127–130 (NKVD), and 157–158 (SA) each bind GTP. Residues C202 and C203 are each lipidated (S-geranylgeranyl cysteine).

The protein belongs to the small GTPase superfamily. Rab family.

It localises to the cell membrane. Intracellular vesicle trafficking and protein transport. The polypeptide is Ras-related protein RABC2b (RABC2B) (Arabidopsis thaliana (Mouse-ear cress)).